The following is a 116-amino-acid chain: Large ribosomal subunit protein bL20 (116 aa).

It belongs to the bacterial ribosomal protein bL20 family.

Functionally, binds directly to 23S ribosomal RNA and is necessary for the in vitro assembly process of the 50S ribosomal subunit. It is not involved in the protein synthesizing functions of that subunit. In Desulfatibacillum aliphaticivorans, this protein is Large ribosomal subunit protein bL20.